Consider the following 207-residue polypeptide: LexA repressor (207 aa).

The H-T-H motif DNA-binding region spans Arg-28–Lys-48. Catalysis depends on for autocatalytic cleavage activity residues Ser-123 and Lys-160.

Belongs to the peptidase S24 family. As to quaternary structure, homodimer.

The enzyme catalyses Hydrolysis of Ala-|-Gly bond in repressor LexA.. In terms of biological role, represses a number of genes involved in the response to DNA damage (SOS response), including recA and lexA. In the presence of single-stranded DNA, RecA interacts with LexA causing an autocatalytic cleavage which disrupts the DNA-binding part of LexA, leading to derepression of the SOS regulon and eventually DNA repair. The protein is LexA repressor of Haemophilus influenzae (strain 86-028NP).